A 468-amino-acid polypeptide reads, in one-letter code: UDP-N-acetylmuramate--L-alanine ligase (468 aa).

G121–T127 contributes to the ATP binding site.

The protein belongs to the MurCDEF family.

Its subcellular location is the cytoplasm. The enzyme catalyses UDP-N-acetyl-alpha-D-muramate + L-alanine + ATP = UDP-N-acetyl-alpha-D-muramoyl-L-alanine + ADP + phosphate + H(+). The protein operates within cell wall biogenesis; peptidoglycan biosynthesis. Functionally, cell wall formation. The protein is UDP-N-acetylmuramate--L-alanine ligase of Borreliella burgdorferi (strain ATCC 35210 / DSM 4680 / CIP 102532 / B31) (Borrelia burgdorferi).